A 150-amino-acid chain; its full sequence is 3-dehydroquinate dehydratase (150 aa).

Tyrosine 23 functions as the Proton acceptor in the catalytic mechanism. Substrate contacts are provided by asparagine 79, histidine 85, and aspartate 92. The active-site Proton donor is histidine 105. Residues 106–107 (IS) and arginine 116 each bind substrate.

It belongs to the type-II 3-dehydroquinase family. In terms of assembly, homododecamer.

The catalysed reaction is 3-dehydroquinate = 3-dehydroshikimate + H2O. Its pathway is metabolic intermediate biosynthesis; chorismate biosynthesis; chorismate from D-erythrose 4-phosphate and phosphoenolpyruvate: step 3/7. Catalyzes a trans-dehydration via an enolate intermediate. This is 3-dehydroquinate dehydratase from Marinomonas sp. (strain MWYL1).